Here is a 537-residue protein sequence, read N- to C-terminus: Putative cysteine ligase BshC (537 aa).

Positions 422–450 (IEKVEGMIEQQRRLNQDLLDEVAGNQNNI) form a coiled coil.

It belongs to the BshC family.

Its function is as follows. Involved in bacillithiol (BSH) biosynthesis. May catalyze the last step of the pathway, the addition of cysteine to glucosamine malate (GlcN-Mal) to generate BSH. In Staphylococcus aureus (strain bovine RF122 / ET3-1), this protein is Putative cysteine ligase BshC.